A 362-amino-acid chain; its full sequence is Serine/threonine-protein kinase SBK2 (362 aa).

Residues M1–M11 are compositionally biased toward basic and acidic residues. Positions M1 to G20 are disordered. The Protein kinase domain occupies Y62–K330. ATP is bound by residues L68 to V76 and K91. D183 serves as the catalytic Proton acceptor. The segment at P317 to C362 is disordered. Basic and acidic residues predominate over residues K330 to S348.

This sequence belongs to the protein kinase superfamily. Ser/Thr protein kinase family. STKL subfamily.

It carries out the reaction L-seryl-[protein] + ATP = O-phospho-L-seryl-[protein] + ADP + H(+). It catalyses the reaction L-threonyl-[protein] + ATP = O-phospho-L-threonyl-[protein] + ADP + H(+). This chain is Serine/threonine-protein kinase SBK2 (Sbk2), found in Rattus norvegicus (Rat).